A 238-amino-acid chain; its full sequence is Complement C1q-like protein 4 (238 aa).

Positions 1–15 (MVLLLLVAIPLLVHS) are cleaved as a signal peptide. Residues 36–101 (GPRGPGPDGA…PPGPGPGGVA (66 aa)) form a disordered region. One can recognise a Collagen-like domain in the interval 53–96 (PPGAKGEVGRRGKAGLRGPPGPPGPRGPPGEPGRPGPPGPPGPG). Pro residues predominate over residues 71–96 (PPGPPGPRGPPGEPGRPGPPGPPGPG). A C1q domain is found at 105–238 (GYVPRIAFYA…TFSGFIIYPD (134 aa)).

As to quaternary structure, forms homooligomers, predominantly dimers or trimers. Forms heterooligomers with C1QL1, C1QL2 and C1QL3, when proteins are coexpressed; this interaction does not occur after secretion. Interacts with ADGRB3. In terms of tissue distribution, highest expression levels in testis and adipose tissue, lower levels in skeletal muscle and kidney.

The protein resides in the secreted. Its function is as follows. May regulate the number of excitatory synapses that are formed on hippocampus neurons. Has no effect on inhibitory synapses. May inhibit adipocyte differentiation at an early stage of the process. The protein is Complement C1q-like protein 4 (C1QL4) of Homo sapiens (Human).